The primary structure comprises 770 residues: Molybdenum cofactor sulfurase (770 aa).

At K231 the chain carries N6-(pyridoxal phosphate)lysine. C395 is a catalytic residue. The 170-residue stretch at 601–770 (DWVSRALGVS…TVSGVIEESE (170 aa)) folds into the MOSC domain.

The protein belongs to the class-V pyridoxal-phosphate-dependent aminotransferase family. MOCOS subfamily. Requires pyridoxal 5'-phosphate as cofactor.

The catalysed reaction is Mo-molybdopterin + L-cysteine + AH2 = thio-Mo-molybdopterin + L-alanine + A + H2O. Sulfurates the molybdenum cofactor. Sulfation of molybdenum is essential for xanthine dehydrogenase (XDH) and aldehyde oxidase (ADO) enzymes in which molybdenum cofactor is liganded by 1 oxygen and 1 sulfur atom in active form. The polypeptide is Molybdenum cofactor sulfurase (Anopheles gambiae (African malaria mosquito)).